Consider the following 115-residue polypeptide: Putative gamma-glutamylcyclotransferase VC_2546 (115 aa).

Residue 8–11 coordinates substrate; it reads YGTL. The active-site Proton acceptor is the E73.

The protein belongs to the gamma-glutamylcyclotransferase family.

Functionally, putative gamma-glutamylcyclotransferase. This Vibrio cholerae serotype O1 (strain ATCC 39315 / El Tor Inaba N16961) protein is Putative gamma-glutamylcyclotransferase VC_2546.